The primary structure comprises 395 residues: Chaperone protein DnaJ 2 (395 aa).

A J domain is found at 10 to 75; that stretch reads NYYADLGVSS…KKRKEYDELK (66 aa). A CR-type zinc finger spans residues 165–242; sequence GTTIPVELTG…CHGRGTVRKS (78 aa). Residues Cys178, Cys181, Cys194, Cys197, Cys216, Cys219, Cys230, and Cys233 each contribute to the Zn(2+) site. CXXCXGXG motif repeat units lie at residues 178 to 185, 194 to 201, 216 to 223, and 230 to 237; these read CNTCHGSG, CGTCDGTG, CATCGGTG, and CDNCHGRG.

The protein belongs to the DnaJ family. Homodimer. Zn(2+) is required as a cofactor.

It is found in the cytoplasm. Functionally, participates actively in the response to hyperosmotic and heat shock by preventing the aggregation of stress-denatured proteins and by disaggregating proteins, also in an autonomous, DnaK-independent fashion. Unfolded proteins bind initially to DnaJ; upon interaction with the DnaJ-bound protein, DnaK hydrolyzes its bound ATP, resulting in the formation of a stable complex. GrpE releases ADP from DnaK; ATP binding to DnaK triggers the release of the substrate protein, thus completing the reaction cycle. Several rounds of ATP-dependent interactions between DnaJ, DnaK and GrpE are required for fully efficient folding. Also involved, together with DnaK and GrpE, in the DNA replication of plasmids through activation of initiation proteins. This Corynebacterium glutamicum (strain ATCC 13032 / DSM 20300 / JCM 1318 / BCRC 11384 / CCUG 27702 / LMG 3730 / NBRC 12168 / NCIMB 10025 / NRRL B-2784 / 534) protein is Chaperone protein DnaJ 2.